The following is a 345-amino-acid chain: Esterase (345 aa).

Residues 1 to 39 form the signal peptide; it reads MSSAMRKTTNSPVVRRLTAAAVALGSCLALAGPAGSAGA. 3 disulfides stabilise this stretch: cysteine 73-cysteine 103, cysteine 156-cysteine 180, and cysteine 236-cysteine 294.

It is found in the secreted. This is Esterase (estA) from Streptomyces scabiei.